A 246-amino-acid polypeptide reads, in one-letter code: tRNA pseudouridine synthase A (246 aa).

The active-site Nucleophile is D52. Y112 provides a ligand contact to substrate.

This sequence belongs to the tRNA pseudouridine synthase TruA family. In terms of assembly, homodimer.

It carries out the reaction uridine(38/39/40) in tRNA = pseudouridine(38/39/40) in tRNA. In terms of biological role, formation of pseudouridine at positions 38, 39 and 40 in the anticodon stem and loop of transfer RNAs. The sequence is that of tRNA pseudouridine synthase A from Pelagibacter ubique (strain HTCC1062).